A 178-amino-acid chain; its full sequence is dCTP deaminase, dUMP-forming (178 aa).

Residues 96–101 (RSSLGR), D113, 121–123 (TLE), Q142, Y156, and Q163 each bind dCTP. E123 acts as the Proton donor/acceptor in catalysis.

It belongs to the dCTP deaminase family. In terms of assembly, homotrimer.

The catalysed reaction is dCTP + 2 H2O = dUMP + NH4(+) + diphosphate. It participates in pyrimidine metabolism; dUMP biosynthesis; dUMP from dCTP: step 1/1. Its function is as follows. Bifunctional enzyme that catalyzes both the deamination of dCTP to dUTP and the hydrolysis of dUTP to dUMP without releasing the toxic dUTP intermediate. The polypeptide is dCTP deaminase, dUMP-forming (Acetivibrio thermocellus (strain ATCC 27405 / DSM 1237 / JCM 9322 / NBRC 103400 / NCIMB 10682 / NRRL B-4536 / VPI 7372) (Clostridium thermocellum)).